A 288-amino-acid polypeptide reads, in one-letter code: Bifunctional protein FolD (288 aa).

Residues 166 to 168 (GRS), Ser-191, and Ile-232 contribute to the NADP(+) site.

Belongs to the tetrahydrofolate dehydrogenase/cyclohydrolase family. As to quaternary structure, homodimer.

The enzyme catalyses (6R)-5,10-methylene-5,6,7,8-tetrahydrofolate + NADP(+) = (6R)-5,10-methenyltetrahydrofolate + NADPH. It catalyses the reaction (6R)-5,10-methenyltetrahydrofolate + H2O = (6R)-10-formyltetrahydrofolate + H(+). It functions in the pathway one-carbon metabolism; tetrahydrofolate interconversion. In terms of biological role, catalyzes the oxidation of 5,10-methylenetetrahydrofolate to 5,10-methenyltetrahydrofolate and then the hydrolysis of 5,10-methenyltetrahydrofolate to 10-formyltetrahydrofolate. The protein is Bifunctional protein FolD of Rickettsia peacockii (strain Rustic).